The chain runs to 272 residues: Regulatory factor X-associated protein (272 aa).

Disordered stretches follow at residues 1–20, 74–142, and 175–195; these read MEAQGVAEGAGPGAASGVPH, LCEG…KTCT, and KKKKSDQALNCGGTASTGSAG. Over residues 79–94 the composition is skewed to acidic residues; sequence GDGEEEAGEDEADLLD. Residues 163 to 178 carry the Nuclear localization signal motif; that stretch reads KKHRNKMYKDKYKKKK. K198 participates in a covalent cross-link: Glycyl lysine isopeptide (Lys-Gly) (interchain with G-Cter in SUMO2). The segment at 214 to 270 is C-terminal domain; it reads TGSFGDRPARPTLLEQVLNQKRLSLLRSPEVVQFLQKQQQLLNQQVLEQRQQQFPGT.

As to quaternary structure, the RFX heterotetrameric complex consists of 2 molecules of RFX5 and one each of RFXAP and RFX-B/RFXANK; with each subunit representing a separate complementation group. RFX forms cooperative DNA binding complexes with X2BP and CBF/NF-Y. RFX associates with CIITA to form an active transcriptional complex. In terms of processing, phosphorylated. In terms of tissue distribution, ubiquitous.

It is found in the nucleus. Part of the RFX complex that binds to the X-box of MHC II promoters. The polypeptide is Regulatory factor X-associated protein (RFXAP) (Homo sapiens (Human)).